The primary structure comprises 315 residues: Methionyl-tRNA formyltransferase (315 aa).

113–116 provides a ligand contact to (6S)-5,6,7,8-tetrahydrofolate; the sequence is SLLP.

This sequence belongs to the Fmt family.

It carries out the reaction L-methionyl-tRNA(fMet) + (6R)-10-formyltetrahydrofolate = N-formyl-L-methionyl-tRNA(fMet) + (6S)-5,6,7,8-tetrahydrofolate + H(+). In terms of biological role, attaches a formyl group to the free amino group of methionyl-tRNA(fMet). The formyl group appears to play a dual role in the initiator identity of N-formylmethionyl-tRNA by promoting its recognition by IF2 and preventing the misappropriation of this tRNA by the elongation apparatus. The sequence is that of Methionyl-tRNA formyltransferase from Klebsiella pneumoniae (strain 342).